The following is a 106-amino-acid chain: Protein translation factor SUI1 homolog (106 aa).

It belongs to the SUI1 family.

In Methanopyrus kandleri (strain AV19 / DSM 6324 / JCM 9639 / NBRC 100938), this protein is Protein translation factor SUI1 homolog.